Here is a 189-residue protein sequence, read N- to C-terminus: Adenylate kinase (189 aa).

Position 11–16 (11–16 (GSGKGT)) interacts with ATP. Residues 31–60 (STGDVLRAEIKNGTELGKTAKGYIDQGQLI) form an NMP region. Residues T32, R37, 58–60 (QLI), 86–89 (GFPR), and Q93 contribute to the AMP site. The interval 127 to 137 (KRGKESGRADD) is LID. R128 serves as a coordination point for ATP. Residues R134 and R145 each contribute to the AMP site. G173 provides a ligand contact to ATP.

It belongs to the adenylate kinase family. In terms of assembly, monomer.

It localises to the cytoplasm. It carries out the reaction AMP + ATP = 2 ADP. It participates in purine metabolism; AMP biosynthesis via salvage pathway; AMP from ADP: step 1/1. Catalyzes the reversible transfer of the terminal phosphate group between ATP and AMP. Plays an important role in cellular energy homeostasis and in adenine nucleotide metabolism. The protein is Adenylate kinase of Bacteroides fragilis (strain ATCC 25285 / DSM 2151 / CCUG 4856 / JCM 11019 / LMG 10263 / NCTC 9343 / Onslow / VPI 2553 / EN-2).